The chain runs to 503 residues: Probable cytosol aminopeptidase (503 aa).

Positions 274 and 279 each coordinate Mn(2+). The active site involves Lys286. Mn(2+) contacts are provided by Asp297, Asp356, and Glu358. Residue Arg360 is part of the active site.

It belongs to the peptidase M17 family. Mn(2+) serves as cofactor.

The protein resides in the cytoplasm. It carries out the reaction Release of an N-terminal amino acid, Xaa-|-Yaa-, in which Xaa is preferably Leu, but may be other amino acids including Pro although not Arg or Lys, and Yaa may be Pro. Amino acid amides and methyl esters are also readily hydrolyzed, but rates on arylamides are exceedingly low.. The enzyme catalyses Release of an N-terminal amino acid, preferentially leucine, but not glutamic or aspartic acids.. Functionally, presumably involved in the processing and regular turnover of intracellular proteins. Catalyzes the removal of unsubstituted N-terminal amino acids from various peptides. This Burkholderia ambifaria (strain MC40-6) protein is Probable cytosol aminopeptidase.